Reading from the N-terminus, the 424-residue chain is Riboflavin biosynthesis protein RibBA (424 aa).

Residues 1–206 (MVTCEAGIAS…VDDLITYRWT (206 aa)) form a DHBP synthase region. D-ribulose 5-phosphate-binding positions include 32–33 (RE), Asp-37, 145–149 (RPGHT), and Glu-169. Mg(2+) is bound at residue Glu-33. His-148 lines the Mg(2+) pocket. A GTP cyclohydrolase II region spans residues 207–424 (FDSLVEHVSS…YETVERTSCC (218 aa)). 257–261 (RVHSE) contributes to the GTP binding site. The Zn(2+) site is built by Cys-262, Cys-273, and Cys-275. Residues Gln-278, 301-303 (EGR), and Thr-323 each bind GTP. The active-site Proton acceptor; for GTP cyclohydrolase activity is Asp-335. The active-site Nucleophile; for GTP cyclohydrolase activity is Arg-337. GTP-binding residues include Thr-358 and Lys-363.

In the N-terminal section; belongs to the DHBP synthase family. It in the C-terminal section; belongs to the GTP cyclohydrolase II family. Mg(2+) serves as cofactor. It depends on Mn(2+) as a cofactor. The cofactor is Zn(2+).

The enzyme catalyses D-ribulose 5-phosphate = (2S)-2-hydroxy-3-oxobutyl phosphate + formate + H(+). The catalysed reaction is GTP + 4 H2O = 2,5-diamino-6-hydroxy-4-(5-phosphoribosylamino)-pyrimidine + formate + 2 phosphate + 3 H(+). The protein operates within cofactor biosynthesis; riboflavin biosynthesis; 2-hydroxy-3-oxobutyl phosphate from D-ribulose 5-phosphate: step 1/1. It participates in cofactor biosynthesis; riboflavin biosynthesis; 5-amino-6-(D-ribitylamino)uracil from GTP: step 1/4. Catalyzes the conversion of D-ribulose 5-phosphate to formate and 3,4-dihydroxy-2-butanone 4-phosphate. Functionally, catalyzes the conversion of GTP to 2,5-diamino-6-ribosylamino-4(3H)-pyrimidinone 5'-phosphate (DARP), formate and pyrophosphate. The protein is Riboflavin biosynthesis protein RibBA of Chlamydia muridarum (strain MoPn / Nigg).